Here is a 138-residue protein sequence, read N- to C-terminus: Large ribosomal subunit protein uL16 (138 aa).

Residues 1–17 (MLIPRKVKHRKQHHPKQ) are compositionally biased toward basic residues. A disordered region spans residues 1–24 (MLIPRKVKHRKQHHPKQRGIASGG).

The protein belongs to the universal ribosomal protein uL16 family. As to quaternary structure, part of the 50S ribosomal subunit.

Binds 23S rRNA and is also seen to make contacts with the A and possibly P site tRNAs. The chain is Large ribosomal subunit protein uL16 from Mycolicibacterium vanbaalenii (strain DSM 7251 / JCM 13017 / BCRC 16820 / KCTC 9966 / NRRL B-24157 / PYR-1) (Mycobacterium vanbaalenii).